Reading from the N-terminus, the 575-residue chain is Putative export ATP-binding/permease protein RBE_0492 (575 aa).

Residues 20-303 enclose the ABC transmembrane type-1 domain; the sequence is LIIVIISLLS…IFELLSEMHL (284 aa). Transmembrane regions (helical) follow at residues 21–41, 61–81, 135–155, 158–178, 242–262, and 277–297; these read IIVI…GNVF, ILYI…RSYF, FLSF…LMFF, FKLA…IIKF, ALFF…VIWI, and IISF…IFEL. The region spanning 336 to 571 is the ABC transporter domain; the sequence is LEFKNVNFSY…SDLYRTIYKE (236 aa). Residue 371 to 378 participates in ATP binding; that stretch reads GRSGSGKS.

This sequence belongs to the ABC transporter superfamily. In terms of assembly, homodimer.

The protein localises to the cell inner membrane. Functionally, part of an ABC transporter complex. Transmembrane domains (TMD) form a pore in the inner membrane and the ATP-binding domain (NBD) is responsible for energy generation. This Rickettsia bellii (strain RML369-C) protein is Putative export ATP-binding/permease protein RBE_0492.